Reading from the N-terminus, the 192-residue chain is Immunity protein YqcF (192 aa).

As to quaternary structure, probably interacts with cognate toxin YqcG but not with other non-cognate toxins. The interaction inhibits the toxic activity of YqcG.

It is found in the cytoplasm. Functionally, immunity component of one of 6 LXG toxin-immunity modules in this strain. They promote kin selection, mediate competition in biofilms, and drive spatial segregation of different strains, indicating that LXG toxins may help avoid warfare between strains in biofilms. Mediates intercellular competition during biofilm formation; disruption of the operon disadvantages the bacteria, but overexpression of the cognate immunity protein restores growth in competition with wild-type. In situ neutralizes the toxic effect of cognate toxin YqcG. Neutralizes the toxic activity of cognate toxin YqcG upon expression in E.coli. Does not have immunity protein activity on other LXG toxins. In Bacillus subtilis (strain 168), this protein is Immunity protein YqcF (yqcF).